Here is a 300-residue protein sequence, read N- to C-terminus: (R)-3-hydroxydecanoyl-ACP:CoA transacylase (300 aa).

The region spanning 29–253 (TIILVNGSLS…HTIRNAGHFI (225 aa)) is the AB hydrolase-1 domain.

Its pathway is polyester biosynthesis; polyhydroxyalkanoate biosynthesis. Its function is as follows. Catalyzes the transfer of the acyl moiety from in vitro synthesized 3-hydroxydecanoyl-CoA to acyl carrier protein. This Pseudomonas aeruginosa (strain ATCC 15692 / DSM 22644 / CIP 104116 / JCM 14847 / LMG 12228 / 1C / PRS 101 / PAO1) protein is (R)-3-hydroxydecanoyl-ACP:CoA transacylase (phaG).